The chain runs to 282 residues: Bis(5'-nucleosyl)-tetraphosphatase, symmetrical (282 aa).

It belongs to the Ap4A hydrolase family.

The enzyme catalyses P(1),P(4)-bis(5'-adenosyl) tetraphosphate + H2O = 2 ADP + 2 H(+). Hydrolyzes diadenosine 5',5'''-P1,P4-tetraphosphate to yield ADP. The sequence is that of Bis(5'-nucleosyl)-tetraphosphatase, symmetrical from Escherichia coli O45:K1 (strain S88 / ExPEC).